Consider the following 371-residue polypeptide: Loganic acid O-methyltransferase (371 aa).

Y31 is an S-adenosyl-L-homocysteine binding site. Positions 37 and 38 each coordinate loganate. 6 residues coordinate S-adenosyl-L-homocysteine: C78, N83, D114, H115, S141, and F142. Loganate-binding residues include H162 and W163. N180 contributes to the Mg(2+) binding site. Loganate-binding residues include A241 and H245. The Mg(2+) site is built by D267, F269, and N270. 2 residues coordinate loganate: Q273 and Q316.

It belongs to the methyltransferase superfamily. Type-7 methyltransferase family. Homodimer. Requires Mg(2+) as cofactor. Expressed in leaves (especially in leaf epidermis), flowers, siliques and stems, and, at low levels, in hairy roots.

It catalyses the reaction loganate + S-adenosyl-L-methionine = loganin + S-adenosyl-L-homocysteine. The protein operates within alkaloid biosynthesis. Strongly repressed by loganin and slightly by S-adenosyl-L-homocysteine. Its function is as follows. Component of the seco-iridoid and derivatives monoterpenoid indole alkaloids (MIAs, e.g. vinblastine and ajmalicine) biosynthesis pathway. Catalyzes the methylation of loganic acid (6S,7R) to produce loganin. Weak activity with secologanic acid as substrate. Inactive on deoxyloganic, dehydrologanic, epiloganic and loganetic acid. In Catharanthus roseus (Madagascar periwinkle), this protein is Loganic acid O-methyltransferase.